We begin with the raw amino-acid sequence, 103 residues long: Small ribosomal subunit protein uS10 (103 aa).

This sequence belongs to the universal ribosomal protein uS10 family. Part of the 30S ribosomal subunit.

Functionally, involved in the binding of tRNA to the ribosomes. The chain is Small ribosomal subunit protein uS10 from Ruthia magnifica subsp. Calyptogena magnifica.